Reading from the N-terminus, the 525-residue chain is Lysine--tRNA ligase (525 aa).

E430 and E437 together coordinate Mg(2+).

Belongs to the class-II aminoacyl-tRNA synthetase family. In terms of assembly, homodimer. Mg(2+) is required as a cofactor.

It localises to the cytoplasm. It carries out the reaction tRNA(Lys) + L-lysine + ATP = L-lysyl-tRNA(Lys) + AMP + diphosphate. This is Lysine--tRNA ligase from Chlamydia caviae (strain ATCC VR-813 / DSM 19441 / 03DC25 / GPIC) (Chlamydophila caviae).